Reading from the N-terminus, the 733-residue chain is MAEVGEDSGARALLALRSAPCSPVLCAAAAAAAFPAAAPPPAPAQPQPPPGPPPPPPPPLPPGAIAGAGSSGGSSGVSGDSAVAGAAPALVAAAAASVRQSPGPALARLEGREFEFLMRQPSVTIGRNSSQGSVDLSMGLSSFISRRHLQLSFQEPHFYLRCLGKNGVFVDGAFQRRGAPALQLPKQCTFRFPSTAIKIQFTSLYHKEEAPASPLRPLYPQISPLKIHIPEPDLRSMVSPVPSPTGTISVPNSCPASPRGAGSSSYRFVQNVTSDLQLAAEFAAKAASEQQADTSGGDSPKDESKPPFSYAQLIVQAISSAQDRQLTLSGIYAHITKHYPYYRTADKGWQNSIRHNLSLNRYFIKVPRSQEEPGKGSFWRIDPASEAKLVEQAFRKRRQRGVSCFRTPFGPLSSRSAPASPTHPGLMSPRSGGLQTPECLSREGSPIPHDPEFGSKLASVPEYRYSQSAPGSPVSAQPVIMAVPPRPSSLVAKPVAYMPASIVTSQQPAGHAIHVVQQAPTVTMVRVVTTSANSANGYILTSQGAAGGSHDAAGAAVLDLGSEARGLEEKPTIAFATIPAAGGVIQTVASQMAPGVPGHTVTILQPATPVTLGQHHLPVRAVTQNGKHAVPTNSLAGNAYALTSPLQLLATQASSSAPVVVTRVCEVGPKEPAAAVAATATTTPATATTASASASSTGEPEVKRSRVEEPSGAVTTPAGVIAAAGPQGPGTGE.

Position 2 is an N-acetylalanine (A2). The interval 2-40 (AEVGEDSGARALLALRSAPCSPVLCAAAAAAAFPAAAPP) is interaction with SIN3A and SIN3B. Residues 36 to 79 (AAAPPPAPAQPQPPPGPPPPPPPPLPPGAIAGAGSSGGSSGVSG) are disordered. Over residues 37–62 (AAPPPAPAQPQPPPGPPPPPPPPLPP) the composition is skewed to pro residues. The interval 95–420 (AASVRQSPGP…PLSSRSAPAS (326 aa)) is required for interaction with FOXO4 and MEF2C. S101 carries the phosphoserine modification. The FHA domain maps to 123 to 175 (VTIGRNSSQGSVDLSMGLSSFISRRHLQLSFQEPHFYLRCLGKNGVFVDGAFQ). 2 positions are modified to omega-N-methylarginine: R161 and R191. Phosphoserine occurs at positions 213, 223, 239, and 243. 2 positions are modified to phosphothreonine: T245 and T247. S253, S257, S295, and S299 each carry phosphoserine. Disordered regions lie at residues 287 to 306 (ASEQQADTSGGDSPKDESKP) and 413 to 436 (SSRSAPASPTHPGLMSPRSGGLQT). The fork-head DNA-binding region spans 305–400 (KPPFSYAQLI…EQAFRKRRQR (96 aa)). Phosphoserine is present on residues S416 and S420. At T422 the chain carries Phosphothreonine. S428 is modified (phosphoserine). T436 is subject to Phosphothreonine. 3 positions are modified to phosphoserine: S441, S445, and S459. Low complexity predominate over residues 676-697 (VAATATTTPATATTASASASST). The interval 676-733 (VAATATTTPATATTASASASSTGEPEVKRSRVEEPSGAVTTPAGVIAAAGPQGPGTGE) is disordered. Positions 700 to 709 (PEVKRSRVEE) are enriched in basic and acidic residues.

Interacts with SIN3A and SIN3B (via PAH2) to form a complex which represses transcription. Component of SIN3A-, but not SIN3B-, containing multiprotein complexes. Interacts with FOXO4 and MEF2C; both interactions inhibit FOXO4 and MEF2C transactivation activity. Interacts (when phosphorylated) with YWHAE/14-3-3-epsilon; promotes sequestration in the cytoplasm and leads to impaired ability to bind DNA. Interacts with FHL2. Interacts with SRF. Interacts with DVL2 and DVL3; the interaction induces DVL2 nuclear translocation. Interacts with BAP1 (when phosphorylated). Accessory component of the polycomb repressive deubiquitinase (PR-DUB) complex, at least composed of BAP1, one of ASXL1, ASXL2 or (probably) ASXL3 and one of MBD5 or MBD6. The PR-DUB core associates with a number of accessory proteins, including FOXK1, FOXK2, KDM1B, HCFC1 and OGT. In terms of processing, phosphorylation by GSK3 (GSK3A or GSK3B) promotes interaction with YWHAE/14-3-3-epsilon and retention in the cytoplasm. In response to mTORC1 signaling, phosphorylation by GSK3 is prevented, leading to translocation to the nucleus. As to expression, expressed both developing and adult tissues. In adults, significant expression is seen in tumors of the brain, colon and lymph node.

Its subcellular location is the nucleus. The protein localises to the cytoplasm. In terms of biological role, transcriptional regulator involved in different processes such as glucose metabolism, aerobic glycolysis, muscle cell differentiation and autophagy. Recognizes and binds the forkhead DNA sequence motif (5'-GTAAACA-3') and can both act as a transcription activator or repressor, depending on the context. Together with FOXK2, acts as a key regulator of metabolic reprogramming towards aerobic glycolysis, a process in which glucose is converted to lactate in the presence of oxygen. Acts by promoting expression of enzymes for glycolysis (such as hexokinase-2 (HK2), phosphofructokinase, pyruvate kinase (PKLR) and lactate dehydrogenase), while suppressing further oxidation of pyruvate in the mitochondria by up-regulating pyruvate dehydrogenase kinases PDK1 and PDK4. Probably plays a role in gluconeogenesis during overnight fasting, when lactate from white adipose tissue and muscle is the main substrate. Involved in mTORC1-mediated metabolic reprogramming: in response to mTORC1 signaling, translocates into the nucleus and regulates the expression of genes associated with glycolysis and downstream anabolic pathways, such as HIF1A, thereby regulating glucose metabolism. Together with FOXK2, acts as a negative regulator of autophagy in skeletal muscle: in response to starvation, enters the nucleus, binds the promoters of autophagy genes and represses their expression, preventing proteolysis of skeletal muscle proteins. Acts as a transcriptional regulator of the myogenic progenitor cell population in skeletal muscle. Binds to the upstream enhancer region (CCAC box) of myoglobin (MB) gene, regulating the myogenic progenitor cell population. Promotes muscle progenitor cell proliferation by repressing the transcriptional activity of FOXO4, thereby inhibiting myogenic differentiation. Involved in remodeling processes of adult muscles that occur in response to physiological stimuli. Required to correct temporal orchestration of molecular and cellular events necessary for muscle repair. Represses myogenic differentiation by inhibiting MEFC activity. Positively regulates Wnt/beta-catenin signaling by translocating DVL into the nucleus. Reduces virus replication, probably by binding the interferon stimulated response element (ISRE) to promote antiviral gene expression. Accessory component of the polycomb repressive deubiquitinase (PR-DUB) complex; recruits the PR-DUB complex to specific FOXK1-bound genes. This chain is Forkhead box protein K1, found in Homo sapiens (Human).